We begin with the raw amino-acid sequence, 241 residues long: Ribonuclease 3 (241 aa).

One can recognise an RNase III domain in the interval 16–144 (HAEFEKKINY…VIGAIFQDGG (129 aa)). E57 contacts Mg(2+). Active-site residues include D61 and E133. A Mg(2+)-binding site is contributed by E133. One can recognise a DRBM domain in the interval 171–240 (DAKSRLQEIL…AALAIKKIES (70 aa)).

Belongs to the ribonuclease III family. Homodimer. Mg(2+) is required as a cofactor.

The protein localises to the cytoplasm. It carries out the reaction Endonucleolytic cleavage to 5'-phosphomonoester.. Functionally, digests double-stranded RNA. Involved in the processing of primary rRNA transcript to yield the immediate precursors to the large and small rRNAs (23S and 16S). Processes some mRNAs, and tRNAs when they are encoded in the rRNA operon. Processes pre-crRNA and tracrRNA of type II CRISPR loci if present in the organism. In Desulfotalea psychrophila (strain LSv54 / DSM 12343), this protein is Ribonuclease 3.